A 95-amino-acid chain; its full sequence is RING finger protein Z (95 aa).

Glycine 2 is lipidated: N-myristoyl glycine; by host. The segment at 38–74 (CKSCWFANKGLLKCSNHYLCLKCLTLMLRRSDYCGIC) adopts an RING-type; atypical zinc-finger fold. A PTAP/PSAP motif motif is present at residues 88-91 (PSAP).

It belongs to the arenaviridae Z protein family. In terms of assembly, interacts with protein NP; this interaction probably directs the encapsidated genome to budding sites. Interacts (via RING domain) with polymerase L; this interaction inhibits viral transcription and replication, Z partially blocks the product exit tunnel for the releasing nascent RNA product. Interacts with the glycoprotein complex; this interaction plays a role in virion budding. Interacts with host eIF4E; this interaction results in eIF4E reduced affinity for its substrate, the 5'-m7 G cap structure. Interacts (via late-budding domain) with host TSG101; this interaction is essential for budding and release of viral particles. Interacts with host RPLP0; this interaction may serve to load ribosome-like particles inside the virion. Interacts with host PML; this interaction induces PML bodies redistribution in the cytoplasm upon viral infection. In terms of processing, myristoylation is required for the role of RING finger protein Z in assembly and budding.

It localises to the virion. The protein resides in the host cytoplasm. It is found in the host perinuclear region. The protein localises to the host cell membrane. Plays a crucial role in virion assembly and budding. Expressed late in the virus life cycle, it acts as an inhibitor of viral transcription and RNA synthesis by interacting with the viral polymerase L. Presumably recruits the NP encapsidated genome to cellular membranes at budding sites via direct interaction with NP. Plays critical roles in the final steps of viral release by interacting with host TSG101, a member of the vacuolar protein-sorting pathway and using other cellular host proteins involved in vesicle formation pathway. The budding of the virus progeny occurs after association of protein Z with the viral glycoprotein complex SSP-GP1-GP2 at the cell periphery, step that requires myristoylation of protein Z. Also selectively represses protein production by associating with host eIF4E. In cell-based minigenome assay, has an inhibitory effect on the ribonucleoprotein machinery (vRNP), which is responsible for the replication and transcription of the viral genome. This Neotoma (wood rats) protein is RING finger protein Z.